A 154-amino-acid polypeptide reads, in one-letter code: Myoglobin (154 aa).

The region spanning 2-148 (GLSDGEWQMV…FRNDIAAKYK (147 aa)) is the Globin domain. Residues Ser-4 and Ser-32 each carry the phosphoserine modification. His-65 provides a ligand contact to nitrite. Residue His-65 coordinates O2. Phosphothreonine is present on Thr-68. Residue His-94 coordinates heme b. Phosphoserine occurs at positions 121 and 133.

It belongs to the globin family. In terms of assembly, monomeric.

The protein resides in the cytoplasm. It is found in the sarcoplasm. The catalysed reaction is Fe(III)-heme b-[protein] + nitric oxide + H2O = Fe(II)-heme b-[protein] + nitrite + 2 H(+). It catalyses the reaction H2O2 + AH2 = A + 2 H2O. Monomeric heme protein which primary function is to store oxygen and facilitate its diffusion within muscle tissues. Reversibly binds oxygen through a pentacoordinated heme iron and enables its timely and efficient release as needed during periods of heightened demand. Depending on the oxidative conditions of tissues and cells, and in addition to its ability to bind oxygen, it also has a nitrite reductase activity whereby it regulates the production of bioactive nitric oxide. Under stress conditions, like hypoxia and anoxia, it also protects cells against reactive oxygen species thanks to its pseudoperoxidase activity. The polypeptide is Myoglobin (Rattus norvegicus (Rat)).